We begin with the raw amino-acid sequence, 188 residues long: Probable DNA-directed RNA polymerase subunit delta (188 aa).

Residues 14–83 (LSMIEVARAI…GENKWGLRSW (70 aa)) form the HTH HARE-type domain. Residues 119–188 (EDAIDYSADD…EDEEDEEEEE (70 aa)) form a disordered region.

The protein belongs to the RpoE family. RNAP is composed of a core of 2 alpha, a beta and a beta' subunits. The core is associated with a delta subunit and one of several sigma factors.

Functionally, participates in both the initiation and recycling phases of transcription. In the presence of the delta subunit, RNAP displays an increased specificity of transcription, a decreased affinity for nucleic acids, and an increased efficiency of RNA synthesis because of enhanced recycling. In Streptococcus equi subsp. equi (strain 4047), this protein is Probable DNA-directed RNA polymerase subunit delta.